The primary structure comprises 387 residues: Phosphoglycerate kinase (387 aa).

Residues 21–23 (DLN), Arg-36, 59–62 (HLGR), Arg-114, and Arg-147 each bind substrate. ATP-binding positions include Lys-198, Glu-314, and 340 to 343 (GGDT).

Belongs to the phosphoglycerate kinase family. As to quaternary structure, monomer.

The protein localises to the cytoplasm. It catalyses the reaction (2R)-3-phosphoglycerate + ATP = (2R)-3-phospho-glyceroyl phosphate + ADP. Its pathway is carbohydrate degradation; glycolysis; pyruvate from D-glyceraldehyde 3-phosphate: step 2/5. The protein is Phosphoglycerate kinase of Erwinia tasmaniensis (strain DSM 17950 / CFBP 7177 / CIP 109463 / NCPPB 4357 / Et1/99).